A 179-amino-acid chain; its full sequence is Large ribosomal subunit protein uL5 (179 aa).

This sequence belongs to the universal ribosomal protein uL5 family. Part of the 50S ribosomal subunit; part of the 5S rRNA/L5/L18/L25 subcomplex. Contacts the 5S rRNA and the P site tRNA. Forms a bridge to the 30S subunit in the 70S ribosome.

In terms of biological role, this is one of the proteins that bind and probably mediate the attachment of the 5S RNA into the large ribosomal subunit, where it forms part of the central protuberance. In the 70S ribosome it contacts protein S13 of the 30S subunit (bridge B1b), connecting the 2 subunits; this bridge is implicated in subunit movement. Contacts the P site tRNA; the 5S rRNA and some of its associated proteins might help stabilize positioning of ribosome-bound tRNAs. The protein is Large ribosomal subunit protein uL5 of Caldanaerobacter subterraneus subsp. tengcongensis (strain DSM 15242 / JCM 11007 / NBRC 100824 / MB4) (Thermoanaerobacter tengcongensis).